Reading from the N-terminus, the 510-residue chain is 2,3-bisphosphoglycerate-independent phosphoglycerate mutase (510 aa).

D12 contributes to the Mn(2+) binding site. A Phosphotyrosine modification is found at Y36. Position 62 (S62) interacts with Mn(2+). The active-site Phosphoserine intermediate is S62. Residues H123, 153-154 (RD), R185, R191, 261-264 (RPDR), and K336 contribute to the substrate site. Mn(2+) is bound by residues D403, H407, D444, H445, and H462.

Belongs to the BPG-independent phosphoglycerate mutase family. As to quaternary structure, monomer. Mn(2+) is required as a cofactor.

The catalysed reaction is (2R)-2-phosphoglycerate = (2R)-3-phosphoglycerate. It participates in carbohydrate degradation; glycolysis; pyruvate from D-glyceraldehyde 3-phosphate: step 3/5. In terms of biological role, essential for rapid growth and for sporulation. Catalyzes the interconversion of 2-phosphoglycerate and 3-phosphoglycerate. The chain is 2,3-bisphosphoglycerate-independent phosphoglycerate mutase from Halalkalibacterium halodurans (strain ATCC BAA-125 / DSM 18197 / FERM 7344 / JCM 9153 / C-125) (Bacillus halodurans).